Reading from the N-terminus, the 286-residue chain is Energy-coupling factor transporter ATP-binding protein EcfA2 (286 aa).

Positions 3-246 (IRFDNVSYTY…KEKLADWHIG (244 aa)) constitute an ABC transporter domain. 40-47 (GQTGSGKS) serves as a coordination point for ATP.

Belongs to the ABC transporter superfamily. Energy-coupling factor EcfA family. In terms of assembly, forms a stable energy-coupling factor (ECF) transporter complex composed of 2 membrane-embedded substrate-binding proteins (S component), 2 ATP-binding proteins (A component) and 2 transmembrane proteins (T component).

The protein resides in the cell membrane. In terms of biological role, ATP-binding (A) component of a common energy-coupling factor (ECF) ABC-transporter complex. Unlike classic ABC transporters this ECF transporter provides the energy necessary to transport a number of different substrates. The sequence is that of Energy-coupling factor transporter ATP-binding protein EcfA2 from Staphylococcus aureus (strain MRSA252).